The following is a 152-amino-acid chain: Putative superoxide dismutase [Cu-Zn] (152 aa).

Cu cation contacts are provided by histidine 43, histidine 45, and histidine 60. A disulfide bridge links cysteine 54 with cysteine 144. Zn(2+) contacts are provided by histidine 60, histidine 68, histidine 77, and aspartate 80. Residue histidine 118 coordinates Cu cation.

This sequence belongs to the Cu-Zn superoxide dismutase family. Requires Cu cation as cofactor. Zn(2+) serves as cofactor.

The catalysed reaction is 2 superoxide + 2 H(+) = H2O2 + O2. Functionally, destroys radicals which are normally produced within the cells and which are toxic to biological systems. This Orgyia pseudotsugata (Douglas-fir tussock moth) protein is Putative superoxide dismutase [Cu-Zn] (SOD).